Here is a 123-residue protein sequence, read N- to C-terminus: Small ribosomal subunit protein uS13c (123 aa).

Positions 90–123 (GKRHRNNLPVRGQRTRTNARSRRGSKKTVTGKKK) are disordered. Residues 102-123 (QRTRTNARSRRGSKKTVTGKKK) show a composition bias toward basic residues.

The protein belongs to the universal ribosomal protein uS13 family. As to quaternary structure, part of the 30S ribosomal subunit.

It is found in the plastid. The protein resides in the chloroplast. In terms of biological role, located at the top of the head of the 30S subunit, it contacts several helices of the 16S rRNA. This Trieres chinensis (Marine centric diatom) protein is Small ribosomal subunit protein uS13c.